Here is a 2531-residue protein sequence, read N- to C-terminus: Probable polyketide synthase 26 (2531 aa).

In terms of domain architecture, Ketosynthase family 3 (KS3) spans 10 to 433; that stretch reads QEDIAIIGFR…GSNCCLVLTE (424 aa). Catalysis depends on for beta-ketoacyl synthase activity residues Cys174, His316, and His356. The acyl/malonyl transferase stretch occupies residues 620–653; that stretch reads GINPSFIVGHSLGELPMAFCSGMIDFDTVCYLLY. Ser630 acts as the For acyl/malonyl transferase activity in catalysis. The segment at 915–1036 is N-terminal hotdog fold; it reads MDTLGFSNEK…ANYHLSHRDD (122 aa). In terms of domain architecture, PKS/mFAS DH spans 915 to 1206; that stretch reads MDTLGFSNEK…LKSLIPLKDP (292 aa). His948 acts as the Proton acceptor; for dehydratase activity in catalysis. The tract at residues 1055 to 1206 is C-terminal hotdog fold; that stretch reads NLTKLSKNQF…LKSLIPLKDP (152 aa). Asp1117 acts as the Proton donor; for dehydratase activity in catalysis. A Carrier domain is found at 2431-2509; the sequence is ASENPVKDLL…DNIKILTDSY (79 aa). Ser2468 carries the post-translational modification O-(pantetheine 4'-phosphoryl)serine.

Requires pantetheine 4'-phosphate as cofactor.

Functionally, probable polyketide synthase. The chain is Probable polyketide synthase 26 (pks26) from Dictyostelium discoideum (Social amoeba).